The following is a 273-amino-acid chain: Dermonecrotic toxin LruSicTox-alphaIC1a (273 aa).

Residue His5 is part of the active site. Residues Glu25 and Asp27 each coordinate Mg(2+). The Nucleophile role is filled by His41. 2 disulfide bridges follow: Cys45/Cys51 and Cys47/Cys190. Mg(2+) is bound at residue Asp85.

Belongs to the arthropod phospholipase D family. Class II subfamily. It depends on Mg(2+) as a cofactor. In terms of tissue distribution, expressed by the venom gland.

It localises to the secreted. The catalysed reaction is an N-(acyl)-sphingosylphosphocholine = an N-(acyl)-sphingosyl-1,3-cyclic phosphate + choline. It carries out the reaction an N-(acyl)-sphingosylphosphoethanolamine = an N-(acyl)-sphingosyl-1,3-cyclic phosphate + ethanolamine. The enzyme catalyses a 1-acyl-sn-glycero-3-phosphocholine = a 1-acyl-sn-glycero-2,3-cyclic phosphate + choline. It catalyses the reaction a 1-acyl-sn-glycero-3-phosphoethanolamine = a 1-acyl-sn-glycero-2,3-cyclic phosphate + ethanolamine. Functionally, dermonecrotic toxins cleave the phosphodiester linkage between the phosphate and headgroup of certain phospholipids (sphingolipid and lysolipid substrates), forming an alcohol (often choline) and a cyclic phosphate. This toxin acts on sphingomyelin (SM). It may also act on ceramide phosphoethanolamine (CPE), lysophosphatidylcholine (LPC) and lysophosphatidylethanolamine (LPE), but not on lysophosphatidylserine (LPS), and lysophosphatidylglycerol (LPG). It acts by transphosphatidylation, releasing exclusively cyclic phosphate products as second products. Induces dermonecrosis, hemolysis, increased vascular permeability, edema, inflammatory response, and platelet aggregation. The chain is Dermonecrotic toxin LruSicTox-alphaIC1a from Loxosceles rufescens (Mediterranean recluse spider).